Consider the following 371-residue polypeptide: GDSL esterase/lipase At3g27950 (371 aa).

An N-terminal signal peptide occupies residues 1–23 (MAISKITLAIIVLLLGFTEKLSA). The Nucleophile role is filled by S39. Residues N82, N143, N178, N194, and N315 are each glycosylated (N-linked (GlcNAc...) asparagine). Catalysis depends on residues D334 and H337.

The protein belongs to the 'GDSL' lipolytic enzyme family.

Its subcellular location is the secreted. This is GDSL esterase/lipase At3g27950 from Arabidopsis thaliana (Mouse-ear cress).